The following is a 436-amino-acid chain: Protein GOLM2 (436 aa).

Met1 bears the N-acetylmethionine mark. Topologically, residues 1–14 are cytoplasmic; the sequence is MVGFGANRRAGRLP. A helical; Signal-anchor for type II membrane protein membrane pass occupies residues 15 to 35; it reads SLVLVVLLVVIVVLAFNYWSI. Positions 35 to 195 form a coiled coil; it reads ISSRHVLLQE…QFLQEQKQEA (161 aa). The Lumenal portion of the chain corresponds to 36-436; the sequence is SSRHVLLQEE…YGKQHFNDVL (401 aa). Composition is skewed to basic and acidic residues over residues 193-207 and 224-247; these read QEAH…KELD and VADK…KRGG. Residues 193–436 are disordered; that stretch reads QEAHKIQSND…YGKQHFNDVL (244 aa). A phosphoserine mark is found at Ser233 and Ser275. Polar residues-rich tracts occupy residues 275–295 and 305–321; these read SVSQ…QPLS and NHNG…SSPL. A phosphoserine mark is found at Ser328 and Ser332. A compositionally biased stretch (basic and acidic residues) spans 344–362; it reads ATKDRVSDFHKLKQSRFFD. Ser366 is modified (phosphoserine). Residues 399–418 are compositionally biased toward acidic residues; the sequence is YNEEEDGDGGEEDVQDDEER. The segment covering 426-436 has biased composition (basic and acidic residues); it reads DYGKQHFNDVL.

Belongs to the GOLM family.

The protein localises to the membrane. This Pongo abelii (Sumatran orangutan) protein is Protein GOLM2 (GOLM2).